A 388-amino-acid chain; its full sequence is MTKTAIVRVAMNGITGRMGYRQHLLRSILPIRDAGGFTLEDGTKVQIEPILVGRNEAKIRELAEKHKVAEWSTDLDSVVNDPTVDIIFDASMTSLRAATLKKAMLAGKHIFTEKPTAETLEEAIELARIGKQAGVTAGVVHDKLYLPGLVKLRRLVDEGFFGRILSIRGEFGYWVFEGDVQAAQRPSWNYRKEDGGGMTTDMFCHWNYVLEGIIGKVKSVNAKTATHIPTRWDEAGKEYKATADDASYGIFELETPGGDDVIGQINSSWAVRVYRDELVEFQVDGTHGSAVAGLNKCVAQQRAHTPKPVWNPDLPVTESFRDQWQEVPANAELDNGFKLQWEEFLRDVVAGREHRFGLLSAARGVQLAELGLQSNDERRTIDIPEITL.

The protein belongs to the Gfo/Idh/MocA family. In terms of assembly, homotetramer. It depends on Zn(2+) as a cofactor.

The enzyme catalyses D-xylose + NADP(+) = D-xylono-1,5-lactone + NADPH + H(+). It catalyses the reaction D-xylose + NAD(+) = D-xylono-1,5-lactone + NADH + H(+). The protein operates within carbohydrate metabolism; D-xylose degradation. Catalyzes the NADP(+)-dependent oxidation of D-xylose. Is able to use both NADP(+) and NAD(+); however, the enzyme shows a very strong preference for NADP(+). Is likely involved in the first step of the oxidative D-xylose degradation pathway. The sequence is that of D-xylose dehydrogenase (xdh) from Paenarthrobacter nicotinovorans (Arthrobacter nicotinovorans).